The chain runs to 904 residues: UPF0182 protein CKL_0015 (904 aa).

The next 7 membrane-spanning stretches (helical) occupy residues 9–29 (SLIV…DFII), 47–67 (LIAI…SIVL), 96–116 (IFII…AATY), 157–177 (ILSL…TLSV), 208–228 (LAVL…LKCI), 253–273 (YKII…SILV), and 279–299 (IIVS…SYTV).

This sequence belongs to the UPF0182 family.

It localises to the cell membrane. The polypeptide is UPF0182 protein CKL_0015 (Clostridium kluyveri (strain ATCC 8527 / DSM 555 / NBRC 12016 / NCIMB 10680 / K1)).